A 286-amino-acid polypeptide reads, in one-letter code: Elongation factor Ts (286 aa).

The segment at 79–82 is involved in Mg(2+) ion dislocation from EF-Tu; sequence TDFV.

Belongs to the EF-Ts family.

It is found in the cytoplasm. Functionally, associates with the EF-Tu.GDP complex and induces the exchange of GDP to GTP. It remains bound to the aminoacyl-tRNA.EF-Tu.GTP complex up to the GTP hydrolysis stage on the ribosome. The polypeptide is Elongation factor Ts (Wolbachia pipientis wMel).